The primary structure comprises 209 residues: Guanylate kinase (209 aa).

The Guanylate kinase-like domain maps to 16–198; that stretch reads GRLVIISGPS…AVTEICQILL (183 aa). 23-30 is a binding site for ATP; it reads GPSGAGKS.

Belongs to the guanylate kinase family.

The protein localises to the cytoplasm. The enzyme catalyses GMP + ATP = GDP + ADP. Functionally, essential for recycling GMP and indirectly, cGMP. This Rhodopirellula baltica (strain DSM 10527 / NCIMB 13988 / SH1) protein is Guanylate kinase.